A 156-amino-acid polypeptide reads, in one-letter code: ATP synthase subunit b (156 aa).

A helical transmembrane segment spans residues 7–29 (LIAQAISFAILIWFTTKFVWPYL).

The protein belongs to the ATPase B chain family. As to quaternary structure, F-type ATPases have 2 components, F(1) - the catalytic core - and F(0) - the membrane proton channel. F(1) has five subunits: alpha(3), beta(3), gamma(1), delta(1), epsilon(1). F(0) has three main subunits: a(1), b(2) and c(10-14). The alpha and beta chains form an alternating ring which encloses part of the gamma chain. F(1) is attached to F(0) by a central stalk formed by the gamma and epsilon chains, while a peripheral stalk is formed by the delta and b chains.

The protein localises to the cell inner membrane. F(1)F(0) ATP synthase produces ATP from ADP in the presence of a proton or sodium gradient. F-type ATPases consist of two structural domains, F(1) containing the extramembraneous catalytic core and F(0) containing the membrane proton channel, linked together by a central stalk and a peripheral stalk. During catalysis, ATP synthesis in the catalytic domain of F(1) is coupled via a rotary mechanism of the central stalk subunits to proton translocation. Its function is as follows. Component of the F(0) channel, it forms part of the peripheral stalk, linking F(1) to F(0). This chain is ATP synthase subunit b, found in Methylobacillus flagellatus (strain ATCC 51484 / DSM 6875 / VKM B-1610 / KT).